A 61-amino-acid polypeptide reads, in one-letter code: Large ribosomal subunit protein uL30 (61 aa).

The protein belongs to the universal ribosomal protein uL30 family. Part of the 50S ribosomal subunit.

The chain is Large ribosomal subunit protein uL30 from Frankia alni (strain DSM 45986 / CECT 9034 / ACN14a).